Reading from the N-terminus, the 128-residue chain is Large-conductance mechanosensitive channel (128 aa).

2 helical membrane-spanning segments follow: residues Phe10–Gly30 and Gly76–Ile96.

Belongs to the MscL family. Homopentamer.

It is found in the cell inner membrane. Its function is as follows. Channel that opens in response to stretch forces in the membrane lipid bilayer. May participate in the regulation of osmotic pressure changes within the cell. The chain is Large-conductance mechanosensitive channel from Haemophilus influenzae (strain 86-028NP).